A 93-amino-acid chain; its full sequence is Small ribosomal subunit protein uS19 (93 aa).

Belongs to the universal ribosomal protein uS19 family.

Protein S19 forms a complex with S13 that binds strongly to the 16S ribosomal RNA. The polypeptide is Small ribosomal subunit protein uS19 (Rhodococcus erythropolis (strain PR4 / NBRC 100887)).